We begin with the raw amino-acid sequence, 338 residues long: MIAWVERVWYGGSRWKFLLWPLSWLYLLVVAIRKTLFAVIKSSASEAGSASIRPPIIVVGNLTVGGAGKTPLVVALVEHFQRRGLRPGVVSRGYGGVSESYPVLVERNPDPGVTGDEPALIYMRTGCPVVVAPKRAQALQTLLDMYDCDVVISDDGLQHLALPRDMEVVVVDAQRGWGNGLCLPAGPLREPVRRLQSVDLVVSNGLHAQVNADYTMQLRPGRWKKVSGDEERGVNYFAGYTAHAVAAIGNPGRFFATLADLDVASIQHAFPDHYSYAQKDIEFNDDLPVLMTEKDAVKCKSFNLENAWYLEVGAELNSAFYERVDARLNELRSHKKDG.

63–70 (TVGGAGKT) contacts ATP.

Belongs to the LpxK family.

It carries out the reaction a lipid A disaccharide + ATP = a lipid IVA + ADP + H(+). The protein operates within glycolipid biosynthesis; lipid IV(A) biosynthesis; lipid IV(A) from (3R)-3-hydroxytetradecanoyl-[acyl-carrier-protein] and UDP-N-acetyl-alpha-D-glucosamine: step 6/6. Transfers the gamma-phosphate of ATP to the 4'-position of a tetraacyldisaccharide 1-phosphate intermediate (termed DS-1-P) to form tetraacyldisaccharide 1,4'-bis-phosphate (lipid IVA). In Hahella chejuensis (strain KCTC 2396), this protein is Tetraacyldisaccharide 4'-kinase.